The primary structure comprises 109 residues: Aquaporin-2 (109 aa).

Over 1 to 6 (SIAFSR) the chain is Cytoplasmic. A helical membrane pass occupies residues 7 to 27 (AVFSEFLATLLFVFFGLGSAL). Residues 28–35 (NWPQALPS) are Extracellular-facing. The chain crosses the membrane as a helical span at residues 36–54 (VLQIAMAFGLAIGTLVQAL). Over 55 to 59 (GHISG) the chain is Cytoplasmic. An intramembrane region (discontinuously helical) is located at residues 60 to 69 (AHINPAVTVA). Positions 63-65 (NPA) match the NPA 1 motif. Residues 70 to 80 (CLVGCHVSFLR) are Cytoplasmic-facing. The helical transmembrane segment at 81–102 (ATFYLAAQLLGAVAGAAILHEI) threads the bilayer. Residues 103–109 (TPPDIRG) lie on the Extracellular side of the membrane.

Belongs to the MIP/aquaporin (TC 1.A.8) family. In terms of assembly, homotetramer. Post-translationally, serine phosphorylation is necessary and sufficient for expression at the apical membrane. Endocytosis is not phosphorylation-dependent. N-glycosylated.

It localises to the apical cell membrane. The protein resides in the basolateral cell membrane. It is found in the cell membrane. The protein localises to the cytoplasmic vesicle membrane. Its subcellular location is the golgi apparatus. It localises to the trans-Golgi network membrane. It catalyses the reaction H2O(in) = H2O(out). The enzyme catalyses glycerol(in) = glycerol(out). Its function is as follows. Forms a water-specific channel that provides the plasma membranes of renal collecting duct with high permeability to water, thereby permitting water to move in the direction of an osmotic gradient. Plays an essential role in renal water homeostasis. Could also be permeable to glycerol. The sequence is that of Aquaporin-2 from Dugong dugon (Dugong).